The primary structure comprises 404 residues: Probable tRNA sulfurtransferase (404 aa).

One can recognise a THUMP domain in the interval threonine 60–threonine 165. ATP contacts are provided by residues methionine 183–leucine 184, histidine 208–phenylalanine 209, arginine 265, glycine 287, and glutamine 296.

It belongs to the ThiI family.

Its subcellular location is the cytoplasm. The enzyme catalyses [ThiI sulfur-carrier protein]-S-sulfanyl-L-cysteine + a uridine in tRNA + 2 reduced [2Fe-2S]-[ferredoxin] + ATP + H(+) = [ThiI sulfur-carrier protein]-L-cysteine + a 4-thiouridine in tRNA + 2 oxidized [2Fe-2S]-[ferredoxin] + AMP + diphosphate. It carries out the reaction [ThiS sulfur-carrier protein]-C-terminal Gly-Gly-AMP + S-sulfanyl-L-cysteinyl-[cysteine desulfurase] + AH2 = [ThiS sulfur-carrier protein]-C-terminal-Gly-aminoethanethioate + L-cysteinyl-[cysteine desulfurase] + A + AMP + 2 H(+). It functions in the pathway cofactor biosynthesis; thiamine diphosphate biosynthesis. Catalyzes the ATP-dependent transfer of a sulfur to tRNA to produce 4-thiouridine in position 8 of tRNAs, which functions as a near-UV photosensor. Also catalyzes the transfer of sulfur to the sulfur carrier protein ThiS, forming ThiS-thiocarboxylate. This is a step in the synthesis of thiazole, in the thiamine biosynthesis pathway. The sulfur is donated as persulfide by IscS. This Streptococcus pneumoniae (strain ATCC 700669 / Spain 23F-1) protein is Probable tRNA sulfurtransferase.